The primary structure comprises 327 residues: GTPase Obg (327 aa).

In terms of domain architecture, Obg spans 2 to 160 (HILKDSLSIT…LNLRLELSLI (159 aa)). An OBG-type G domain is found at 161-326 (ADIGLVGFPN…LVSELFALSR (166 aa)). Residues 167 to 174 (GFPNAGKS), 192 to 196 (FTTRF), 213 to 216 (DVPG), 280 to 283 (NKLD), and 307 to 309 (SIY) contribute to the GTP site. 2 residues coordinate Mg(2+): Ser-174 and Thr-194.

The protein belongs to the TRAFAC class OBG-HflX-like GTPase superfamily. OBG GTPase family. As to quaternary structure, monomer. The cofactor is Mg(2+).

It localises to the cytoplasm. An essential GTPase which binds GTP, GDP and possibly (p)ppGpp with moderate affinity, with high nucleotide exchange rates and a fairly low GTP hydrolysis rate. Plays a role in control of the cell cycle, stress response, ribosome biogenesis and in those bacteria that undergo differentiation, in morphogenesis control. This chain is GTPase Obg, found in Borrelia hermsii (strain HS1 / DAH).